The chain runs to 371 residues: Phospho-N-acetylmuramoyl-pentapeptide-transferase (371 aa).

Helical transmembrane passes span 25–45, 77–94, 136–156, 172–192, 204–224, 240–260, 269–289, 296–316, and 348–368; these read TLLA…WLIA, MGGL…ALWA, IGWQ…HPAS, LIPH…IVGF, GLAI…AYVA, GTGE…AFLW, FMGD…AFMI, VIVG…VGVF, and KVVL…LATL.

This sequence belongs to the glycosyltransferase 4 family. MraY subfamily. The cofactor is Mg(2+).

It is found in the cell inner membrane. The enzyme catalyses UDP-N-acetyl-alpha-D-muramoyl-L-alanyl-gamma-D-glutamyl-meso-2,6-diaminopimeloyl-D-alanyl-D-alanine + di-trans,octa-cis-undecaprenyl phosphate = di-trans,octa-cis-undecaprenyl diphospho-N-acetyl-alpha-D-muramoyl-L-alanyl-D-glutamyl-meso-2,6-diaminopimeloyl-D-alanyl-D-alanine + UMP. Its pathway is cell wall biogenesis; peptidoglycan biosynthesis. Its function is as follows. Catalyzes the initial step of the lipid cycle reactions in the biosynthesis of the cell wall peptidoglycan: transfers peptidoglycan precursor phospho-MurNAc-pentapeptide from UDP-MurNAc-pentapeptide onto the lipid carrier undecaprenyl phosphate, yielding undecaprenyl-pyrophosphoryl-MurNAc-pentapeptide, known as lipid I. The sequence is that of Phospho-N-acetylmuramoyl-pentapeptide-transferase from Opitutus terrae (strain DSM 11246 / JCM 15787 / PB90-1).